The following is a 434-amino-acid chain: MDLLRRVAVVAVLLSLPSRGRSGGGGSDLHPVVLVPGYGSNRLYARLTAAYEPAAPRCGAREGKDEWFQLWPIDAAASEPAQAPCLAEKMSLVYDPVADDYRNVAGVVTRVPSFASTRALVGWDPLVRQLEAMGHRDGGSLFAAPYDFRYAVAPRGHPSAVGERYFARLTRLIERASRLNGGRPAVVVAHSFGCALTYQFLRARPLAWRQRFVKHAVLLAAALGGFAEGMDGLASGAGSGLPNLAPPARARLARSQQSALWRLPTPMVFGDRPVVVTKNSTYSANNITEFLDAIGFTEGVQPYVTRVLPMWRALPAPMVPVTSMYGVGVRTPETFVYGEAGFEGTPEVVYGDGDGNMNIVSLMAAEEWSGVEGQILKVVRLPGVSHVGFFSDLALKKVVAEIQKAVSSIEVHRKEKIFSFLNNFEFTIPVPLGW.

Ser191 acts as the Acyl-ester intermediate in catalysis. Residues Asp354 and His386 each act as charge relay system in the active site.

This sequence belongs to the AB hydrolase superfamily. Lipase family.

This chain is Lecithin-cholesterol acyltransferase-like 1, found in Oryza sativa subsp. japonica (Rice).